Here is a 216-residue protein sequence, read N- to C-terminus: Large ribosomal subunit protein uL24m (216 aa).

Residues 1–9 constitute a mitochondrion transit peptide; the sequence is MRLTLLLEM. Positions 56 to 89 constitute a KOW domain; that stretch reads YFRGDTVEVLHGKDAGKQGKVTQVVRARNWVVVD.

This sequence belongs to the universal ribosomal protein uL24 family. In terms of assembly, component of the mitochondrial ribosome large subunit (39S) which comprises a 16S rRNA and about 50 distinct proteins. As to expression, ubiquitous. Expressed at greater levels in the kidney, adipose tissue, muscle and liver than the brain, heart, ovary and lung.

The protein localises to the mitochondrion. In Xenopus laevis (African clawed frog), this protein is Large ribosomal subunit protein uL24m (mrpl24).